A 1007-amino-acid chain; its full sequence is Zinc finger CCCH domain-containing protein 4 (1007 aa).

Residues 28–192 (VEKVKGNRVT…FRDLGRGERV (165 aa)) form the Helicase ATP-binding domain. 41-48 (GDTGCGKS) is an ATP binding site. A DEAH box motif is present at residues 139 to 142 (DEIH). The region spanning 250-420 (LIHRLLLHIH…EQVLMICCAE (171 aa)) is the Helicase C-terminal domain. 2 consecutive C3H1-type zinc fingers follow at residues 723–750 (ALEN…HSSR) and 751–778 (APRP…HDSG).

This chain is Zinc finger CCCH domain-containing protein 4, found in Oryza sativa subsp. japonica (Rice).